A 199-amino-acid polypeptide reads, in one-letter code: Prolactin (199 aa).

Cysteine 4 and cysteine 11 form a disulfide bridge. Serine 26 bears the Phosphoserine mark. Asparagine 31 carries an N-linked (GlcNAc...) asparagine; partial glycan. Phosphoserine occurs at positions 34 and 90. Cystine bridges form between cysteine 58–cysteine 174 and cysteine 191–cysteine 199.

This sequence belongs to the somatotropin/prolactin family. As to quaternary structure, interacts with PRLR.

The protein resides in the secreted. In terms of biological role, prolactin acts primarily on the mammary gland by promoting lactation. The polypeptide is Prolactin (PRL) (Camelus dromedarius (Dromedary)).